Consider the following 307-residue polypeptide: Methionyl-tRNA formyltransferase (307 aa).

Residue 108 to 111 (SLLP) coordinates (6S)-5,6,7,8-tetrahydrofolate.

This sequence belongs to the Fmt family.

It carries out the reaction L-methionyl-tRNA(fMet) + (6R)-10-formyltetrahydrofolate = N-formyl-L-methionyl-tRNA(fMet) + (6S)-5,6,7,8-tetrahydrofolate + H(+). Functionally, attaches a formyl group to the free amino group of methionyl-tRNA(fMet). The formyl group appears to play a dual role in the initiator identity of N-formylmethionyl-tRNA by promoting its recognition by IF2 and preventing the misappropriation of this tRNA by the elongation apparatus. The polypeptide is Methionyl-tRNA formyltransferase (Xylella fastidiosa (strain 9a5c)).